We begin with the raw amino-acid sequence, 415 residues long: Adipocyte plasma membrane-associated protein (415 aa).

The Cytoplasmic portion of the chain corresponds to 1 to 39; the sequence is MNEPEGLRFRRLNRPHIITDETHEPQYKATSTYSGKVFR. A helical membrane pass occupies residues 40–60; that stretch reads VTLLTMVAFLLLPLLVVVFVL. The Extracellular portion of the chain corresponds to 61 to 412; sequence ESPIQPEVFS…RSPYLCKLDL (352 aa). N-linked (GlcNAc...) asparagine glycosylation is present at Asn159.

Belongs to the strictosidine synthase family.

Its subcellular location is the membrane. The sequence is that of Adipocyte plasma membrane-associated protein (apmap) from Danio rerio (Zebrafish).